We begin with the raw amino-acid sequence, 565 residues long: Oxygen-dependent choline dehydrogenase (565 aa).

7–36 (DYIICGAGSAGNVLATRLTEDPDVTVLLLE) provides a ligand contact to FAD. His-474 serves as the catalytic Proton acceptor.

This sequence belongs to the GMC oxidoreductase family. The cofactor is FAD.

It catalyses the reaction choline + A = betaine aldehyde + AH2. It carries out the reaction betaine aldehyde + NAD(+) + H2O = glycine betaine + NADH + 2 H(+). Its pathway is amine and polyamine biosynthesis; betaine biosynthesis via choline pathway; betaine aldehyde from choline (cytochrome c reductase route): step 1/1. In terms of biological role, involved in the biosynthesis of the osmoprotectant glycine betaine. Catalyzes the oxidation of choline to betaine aldehyde and betaine aldehyde to glycine betaine at the same rate. This is Oxygen-dependent choline dehydrogenase from Burkholderia thailandensis (strain ATCC 700388 / DSM 13276 / CCUG 48851 / CIP 106301 / E264).